The primary structure comprises 121 residues: Large ribosomal subunit protein uL24 (121 aa).

Belongs to the universal ribosomal protein uL24 family. In terms of assembly, part of the 50S ribosomal subunit.

In terms of biological role, one of two assembly initiator proteins, it binds directly to the 5'-end of the 23S rRNA, where it nucleates assembly of the 50S subunit. Functionally, located at the polypeptide exit tunnel on the outside of the subunit. This Methanocorpusculum labreanum (strain ATCC 43576 / DSM 4855 / Z) protein is Large ribosomal subunit protein uL24.